The primary structure comprises 827 residues: Putative potassium transporter 12 (827 aa).

Positions 1–31 (MEEIEEGSSNNSIRRVGTGSSDRRWVDGSEV) are disordered. The Cytoplasmic portion of the chain corresponds to 1–82 (MEEIEEGSSN…AGSHGHNLKD (82 aa)). A helical transmembrane segment spans residues 83 to 103 (LSLLTTLGIAFQTLGVVYGDM). Residues 104 to 129 (GTSPLYVFSDVFSKVPIRSEVDVLGA) lie on the Extracellular side of the membrane. A helical membrane pass occupies residues 130 to 150 (LSLVIYTIAVIPLAKYVFVVL). Over 151–216 (KANDNGEGGT…ALETKGYLKT (66 aa)) the chain is Cytoplasmic. Residues 217–237 (LLLLLVLMGTSMIIGDGILTP) traverse the membrane as a helical segment. Topologically, residues 238–253 (AMSVMSAMSGLQGEVK) are extracellular. Residues 254-274 (GFGTNALVMSSIVILVALFSI) traverse the membrane as a helical segment. The Cytoplasmic segment spans residues 275–281 (QRFGTGK). Residues 282-302 (VGFLFAPVLALWFFSLGAIGI) traverse the membrane as a helical segment. Topologically, residues 303 to 335 (YNLLKYDFTVIRALNPFYIVLFFNKNSKQAWSA) are extracellular. The chain crosses the membrane as a helical span at residues 336–356 (LGGCVLCITGAEAMFADLGHF). Residues 357–363 (SVRSIQM) lie on the Cytoplasmic side of the membrane. Residues 364 to 384 (AFTCVVFPCLLLAYMGQAAYL) form a helical membrane-spanning segment. The Extracellular segment spans residues 385–402 (TKHPEASARIFYDSVPKS). A helical membrane pass occupies residues 403-423 (LFWPVFVIATLAAMIASQAMI). The Cytoplasmic portion of the chain corresponds to 424-454 (SATFSCVKQAMALGCFPRLKIIHTSKKRIGQ). Residues 455–475 (IYIPVINWFLMIMCILVVSIF) traverse the membrane as a helical segment. Over 476 to 480 (RSTTH) the chain is Extracellular. 2 helical membrane-spanning segments follow: residues 481 to 501 (IANA…VLVT) and 502 to 522 (LVML…PLIF). Residues 523–536 (GSVETIYLLAVLTK) are Extracellular-facing. Residues 537-557 (ILEGGWVPLVFATFFLTVMYI) form a helical membrane-spanning segment. Residues 558-827 (WNYGSVLKYQ…ILQAGMTYMV (270 aa)) are Cytoplasmic-facing. A disordered region spans residues 728 to 750 (RSEPEQELDSEVLPSSSVGSSME). Over residues 738-748 (EVLPSSSVGSS) the composition is skewed to low complexity.

It belongs to the HAK/KUP transporter (TC 2.A.72.3) family.

It is found in the cell membrane. Putative potassium transporter. The protein is Putative potassium transporter 12 (POT12) of Arabidopsis thaliana (Mouse-ear cress).